The sequence spans 191 residues: Leucyl/phenylalanyl-tRNA--protein transferase (191 aa).

The protein belongs to the L/F-transferase family.

It localises to the cytoplasm. The catalysed reaction is N-terminal L-lysyl-[protein] + L-leucyl-tRNA(Leu) = N-terminal L-leucyl-L-lysyl-[protein] + tRNA(Leu) + H(+). It catalyses the reaction N-terminal L-arginyl-[protein] + L-leucyl-tRNA(Leu) = N-terminal L-leucyl-L-arginyl-[protein] + tRNA(Leu) + H(+). It carries out the reaction L-phenylalanyl-tRNA(Phe) + an N-terminal L-alpha-aminoacyl-[protein] = an N-terminal L-phenylalanyl-L-alpha-aminoacyl-[protein] + tRNA(Phe). In terms of biological role, functions in the N-end rule pathway of protein degradation where it conjugates Leu, Phe and, less efficiently, Met from aminoacyl-tRNAs to the N-termini of proteins containing an N-terminal arginine or lysine. The protein is Leucyl/phenylalanyl-tRNA--protein transferase of Herpetosiphon aurantiacus (strain ATCC 23779 / DSM 785 / 114-95).